Reading from the N-terminus, the 610-residue chain is Glutamine--fructose-6-phosphate aminotransferase [isomerizing] (610 aa).

The Nucleophile; for GATase activity role is filled by cysteine 2. Residues 2–221 (CGIVGAVAQR…DGDVVDLQLA (220 aa)) enclose the Glutamine amidotransferase type-2 domain. 2 SIS domains span residues 286–426 (AYKV…TRGR) and 459–600 (WADR…VDKP). Lysine 605 acts as the For Fru-6P isomerization activity in catalysis.

As to quaternary structure, homodimer.

The protein resides in the cytoplasm. The catalysed reaction is D-fructose 6-phosphate + L-glutamine = D-glucosamine 6-phosphate + L-glutamate. In terms of biological role, catalyzes the first step in hexosamine metabolism, converting fructose-6P into glucosamine-6P using glutamine as a nitrogen source. This is Glutamine--fructose-6-phosphate aminotransferase [isomerizing] from Bordetella pertussis (strain Tohama I / ATCC BAA-589 / NCTC 13251).